Here is a 543-residue protein sequence, read N- to C-terminus: Protein lin-9 homolog (543 aa).

The segment at 21-82 (REGSLSNTLN…SRSPRRSQRV (62 aa)) is disordered. The segment covering 24-55 (SLSNTLNEKNNLPKSQTTRGRSSYVSMETPTR) has biased composition (polar residues). A coiled-coil region spans residues 355-451 (IKKEHIKHLK…VLRQNNTLAS (97 aa)).

Belongs to the lin-9 family. As to quaternary structure, component of the DREAM complex.

It is found in the nucleus. The protein is Protein lin-9 homolog (lin9) of Danio rerio (Zebrafish).